Consider the following 573-residue polypeptide: Adenine deaminase (573 aa).

It belongs to the metallo-dependent hydrolases superfamily. Adenine deaminase family. The cofactor is Mn(2+).

It catalyses the reaction adenine + H2O + H(+) = hypoxanthine + NH4(+). This is Adenine deaminase from Bacillus licheniformis (strain ATCC 14580 / DSM 13 / JCM 2505 / CCUG 7422 / NBRC 12200 / NCIMB 9375 / NCTC 10341 / NRRL NRS-1264 / Gibson 46).